Reading from the N-terminus, the 471-residue chain is ATP synthase subunit beta (471 aa).

153–160 (GGAGVGKT) serves as a coordination point for ATP.

This sequence belongs to the ATPase alpha/beta chains family. F-type ATPases have 2 components, CF(1) - the catalytic core - and CF(0) - the membrane proton channel. CF(1) has five subunits: alpha(3), beta(3), gamma(1), delta(1), epsilon(1). CF(0) has four main subunits: a(1), b(1), b'(1) and c(9-12).

It localises to the cell membrane. The enzyme catalyses ATP + H2O + 4 H(+)(in) = ADP + phosphate + 5 H(+)(out). Produces ATP from ADP in the presence of a proton gradient across the membrane. The catalytic sites are hosted primarily by the beta subunits. This is ATP synthase subunit beta from Chloroflexus aurantiacus (strain ATCC 29364 / DSM 637 / Y-400-fl).